We begin with the raw amino-acid sequence, 145 residues long: Flagellar assembly factor FliW (145 aa).

The protein belongs to the FliW family. Interacts with translational regulator CsrA and flagellin(s).

It is found in the cytoplasm. Its function is as follows. Acts as an anti-CsrA protein, binds CsrA and prevents it from repressing translation of its target genes, one of which is flagellin. Binds to flagellin and participates in the assembly of the flagellum. This chain is Flagellar assembly factor FliW, found in Clostridium tetani (strain Massachusetts / E88).